Here is a 65-residue protein sequence, read N- to C-terminus: Large ribosomal subunit protein uL29 (65 aa).

This sequence belongs to the universal ribosomal protein uL29 family.

This Lactobacillus acidophilus (strain ATCC 700396 / NCK56 / N2 / NCFM) protein is Large ribosomal subunit protein uL29.